The chain runs to 117 residues: MVTETPLEKPLDIGEIPLPAMEKRATEVAILLKTLAHPARLMLACTLAQGEFSVGELEAKLDIRQPTLSQQLGVLREAGIVDTRREAKQIFYRLAEDKAARLIEALYAIFCAPEENL.

The region spanning 20-114 (AMEKRATEVA…ALYAIFCAPE (95 aa)) is the HTH arsR-type domain. Positions 54-77 (VGELEAKLDIRQPTLSQQLGVLRE) form a DNA-binding region, H-T-H motif.

In terms of biological role, represses an operon that comprises at least itself and blh. Binds to a palindromic AT-rich sequence spanning the -10 region of the blh promoter and blocks transcription of the operon. The polypeptide is Biofilm growth-associated repressor (bigR) (Agrobacterium fabrum (strain C58 / ATCC 33970) (Agrobacterium tumefaciens (strain C58))).